The sequence spans 185 residues: MIDDILLEAEDKMDKAVEVARDELGAIRTGRANAALFQKILVDYYGAPTPLQQLAGITIPEARVILINPYDRGAASEIEKALRASDLGVNPSDDGNVIRIVLPQLTEERRREYVKLAKGKGEDARVSVRAVRRKAKDELDRIVRDGEAGEDEVARAEKELELATKSHVDAIDDLLSHKERELLEV.

Belongs to the RRF family.

Its subcellular location is the cytoplasm. Its function is as follows. Responsible for the release of ribosomes from messenger RNA at the termination of protein biosynthesis. May increase the efficiency of translation by recycling ribosomes from one round of translation to another. This chain is Ribosome-recycling factor, found in Beutenbergia cavernae (strain ATCC BAA-8 / DSM 12333 / CCUG 43141 / JCM 11478 / NBRC 16432 / NCIMB 13614 / HKI 0122).